Reading from the N-terminus, the 341-residue chain is MKALAKLKAEEGIWMTNVPQPELGHNDIMIKIRKTAICGTDVHIYNWDEWSQKTIPVPMVVGHEYVGEVVAIGQEVKGFNIGDRVSGEGHITCGHCRNCRGGRTHLCRNTVGVGVNRPGSFAEYLVIPAFNAFKIPDNISDELAAIFDPFGNAVHTALSFDLVGEDVLVSGAGPIGIMAAAVCKHVGARHVVITDVNEYRLDLARKMGVTRAVNVNKENLNDVMAELGMTEGFDVGLEMSGAPPAFRALLNSMNHGGRIAMLGIPPSDMSIDWNQVIFKGLFIKGIYGREMFETWYKMAALIQSGLDLTPIITHRFSIDEFQQGFDAMRSGKSGKVILNWD.

Cysteine 38 contacts Zn(2+). Residues threonine 40 and histidine 43 each act as charge relay system in the active site. Zn(2+)-binding residues include histidine 63, glutamate 64, cysteine 93, cysteine 96, cysteine 99, and cysteine 107. Residues isoleucine 175, aspartate 195, arginine 200, 262-264 (LGI), and 286-287 (IY) each bind NAD(+).

Belongs to the zinc-containing alcohol dehydrogenase family. As to quaternary structure, homotetramer. Zn(2+) serves as cofactor.

The protein resides in the cytoplasm. It carries out the reaction L-threonine + NAD(+) = (2S)-2-amino-3-oxobutanoate + NADH + H(+). Its pathway is amino-acid degradation; L-threonine degradation via oxydo-reductase pathway; glycine from L-threonine: step 1/2. Its function is as follows. Catalyzes the NAD(+)-dependent oxidation of L-threonine to 2-amino-3-ketobutyrate. The polypeptide is L-threonine 3-dehydrogenase (Yersinia enterocolitica serotype O:8 / biotype 1B (strain NCTC 13174 / 8081)).